Consider the following 241-residue polypeptide: Putative ABC transporter ATP-binding protein CA_C0773 (241 aa).

Residues 2-241 enclose the ABC transporter domain; sequence IKLEKVSFTY…REFLMECNII (240 aa). 34–41 contributes to the ATP binding site; that stretch reads GPNGSGKS.

This sequence belongs to the ABC transporter superfamily.

The protein localises to the cell membrane. Its function is as follows. Probably part of an ABC transporter complex. Responsible for energy coupling to the transport system. The polypeptide is Putative ABC transporter ATP-binding protein CA_C0773 (Clostridium acetobutylicum (strain ATCC 824 / DSM 792 / JCM 1419 / IAM 19013 / LMG 5710 / NBRC 13948 / NRRL B-527 / VKM B-1787 / 2291 / W)).